Reading from the N-terminus, the 879-residue chain is Protein translocase subunit SecA (879 aa).

ATP is bound by residues Q87, 105–109 (GEGKT), and D509. The tract at residues 834–879 (IAEDSEKLKPITGTKKPKRNDPCPCGSGKKYKNCCGQSGPKKGLLA) is disordered. C856, C858, C867, and C868 together coordinate Zn(2+).

It belongs to the SecA family. As to quaternary structure, monomer and homodimer. Part of the essential Sec protein translocation apparatus which comprises SecA, SecYEG and auxiliary proteins SecDF-YajC and YidC. Zn(2+) is required as a cofactor.

The protein localises to the cell inner membrane. Its subcellular location is the cytoplasm. The enzyme catalyses ATP + H2O + cellular proteinSide 1 = ADP + phosphate + cellular proteinSide 2.. Part of the Sec protein translocase complex. Interacts with the SecYEG preprotein conducting channel. Has a central role in coupling the hydrolysis of ATP to the transfer of proteins into and across the cell membrane, serving as an ATP-driven molecular motor driving the stepwise translocation of polypeptide chains across the membrane. This is Protein translocase subunit SecA from Sulfurovum sp. (strain NBC37-1).